A 562-amino-acid polypeptide reads, in one-letter code: Lamassu protein LmuB (562 aa).

Functionally, component of antiviral defense system Lamassu type I, composed of LmuA and LmuB. Expression of Lamassu type I in B.subtilis (strain BEST7003) confers resistance to phages phi3T, SpBeta and SPR. May be an ATPase. This is Lamassu protein LmuB from Bacillus sp. (strain NCIM 5461 / CCTCC AB 2011126 / NIO-1130).